Consider the following 442-residue polypeptide: MDIYYILNHDNSDNNIFDFENNSDTIDIGKNYKKCNGQGQMLPPPTLITPSNQNDTITYYTDGRSISVPRKMLIDPNTIVDCGTNGIMFIAFNFETQKRVILKKLSKRMFDNELNGHRIIRNLIFQNLFQGGKHISTYQSIFKRKCSDSYQPPLTSILNSIISSNDNPQQHSTLIQQKDDEDFYFESIQPQYSLLNLISNNMLDQDDICQLFYEILMGLKFMHSAGVIHRDLDPENSIFVDENFNIKFTEFNNCFLLDTDPTFLFNKEYITNTYSYRAPETIWGDSLYTEATDVWGAGVLFAELLLGKRLFRSFNSKEHLKSIYKLIGAPKASEGAYVVKGELLFFLMEYNRKNSFQPTFNNTFIGCNQIQIDLLKNMLCWDPRDRYSVNEILESPYFENIHDRTNFIPCDKNLNVNIHFDILNLKPNQMTNLIDQEFLNPS.

The 325-residue stretch at 74-398 (IDPNTIVDCG…VNEILESPYF (325 aa)) folds into the Protein kinase domain. Residues 80 to 88 (VDCGTNGIM) and K103 contribute to the ATP site. The active-site Proton acceptor is the D231.

Belongs to the protein kinase superfamily. CMGC Ser/Thr protein kinase family. MAP kinase subfamily.

The enzyme catalyses L-seryl-[protein] + ATP = O-phospho-L-seryl-[protein] + ADP + H(+). It carries out the reaction L-threonyl-[protein] + ATP = O-phospho-L-threonyl-[protein] + ADP + H(+). The chain is Probable serine/threonine-protein kinase kinase DDB_G0280643 from Dictyostelium discoideum (Social amoeba).